The following is a 261-amino-acid chain: Cytochrome c oxidase subunit 3 (261 aa).

Over 1–15 the chain is Mitochondrial matrix; that stretch reads MAHQAHSYHMVDPSP. Residues 16 to 34 traverse the membrane as a helical segment; that stretch reads WPIFGAAAALLTTSGLIMW. Over 35 to 40 the chain is Mitochondrial intermembrane; that stretch reads FHYSST. Residues 41 to 66 form a helical membrane-spanning segment; sequence TLLTMGLLSMLLVMLQWWRDVVREST. Topologically, residues 67–72 are mitochondrial matrix; sequence FQGHHT. A helical membrane pass occupies residues 73 to 105; that stretch reads PTVQKGLRYGMILFITSEAFFFLGFFWAFFHSS. The Mitochondrial intermembrane segment spans residues 106-128; that stretch reads LAPTPELGGQWPPTGVKPLNPLE. The helical transmembrane segment at 129-152 threads the bilayer; that stretch reads VPLLNTAILLASGVTVTWAHHSIT. Topologically, residues 153 to 155 are mitochondrial matrix; it reads EGN. A helical membrane pass occupies residues 156-183; sequence RKQAIHALTLTILLGFYFTALQAMEYHE. Over 184 to 190 the chain is Mitochondrial intermembrane; the sequence is ASFSIAD. Residues 191-223 form a helical membrane-spanning segment; it reads SVYGSTFFVATGFHGLHVIIGSSFLTVCLLRLI. The Mitochondrial matrix portion of the chain corresponds to 224–232; sequence KFHFTPNHH. The chain crosses the membrane as a helical span at residues 233–256; the sequence is FGFEAAAWYWHFVDIIWLFLYMSM. Residues 257-261 lie on the Mitochondrial intermembrane side of the membrane; sequence YWWGS.

It belongs to the cytochrome c oxidase subunit 3 family. In terms of assembly, component of the cytochrome c oxidase (complex IV, CIV), a multisubunit enzyme composed of 14 subunits. The complex is composed of a catalytic core of 3 subunits MT-CO1, MT-CO2 and MT-CO3, encoded in the mitochondrial DNA, and 11 supernumerary subunits COX4I, COX5A, COX5B, COX6A, COX6B, COX6C, COX7A, COX7B, COX7C, COX8 and NDUFA4, which are encoded in the nuclear genome. The complex exists as a monomer or a dimer and forms supercomplexes (SCs) in the inner mitochondrial membrane with NADH-ubiquinone oxidoreductase (complex I, CI) and ubiquinol-cytochrome c oxidoreductase (cytochrome b-c1 complex, complex III, CIII), resulting in different assemblies (supercomplex SCI(1)III(2)IV(1) and megacomplex MCI(2)III(2)IV(2)).

Its subcellular location is the mitochondrion inner membrane. The enzyme catalyses 4 Fe(II)-[cytochrome c] + O2 + 8 H(+)(in) = 4 Fe(III)-[cytochrome c] + 2 H2O + 4 H(+)(out). In terms of biological role, component of the cytochrome c oxidase, the last enzyme in the mitochondrial electron transport chain which drives oxidative phosphorylation. The respiratory chain contains 3 multisubunit complexes succinate dehydrogenase (complex II, CII), ubiquinol-cytochrome c oxidoreductase (cytochrome b-c1 complex, complex III, CIII) and cytochrome c oxidase (complex IV, CIV), that cooperate to transfer electrons derived from NADH and succinate to molecular oxygen, creating an electrochemical gradient over the inner membrane that drives transmembrane transport and the ATP synthase. Cytochrome c oxidase is the component of the respiratory chain that catalyzes the reduction of oxygen to water. Electrons originating from reduced cytochrome c in the intermembrane space (IMS) are transferred via the dinuclear copper A center (CU(A)) of subunit 2 and heme A of subunit 1 to the active site in subunit 1, a binuclear center (BNC) formed by heme A3 and copper B (CU(B)). The BNC reduces molecular oxygen to 2 water molecules using 4 electrons from cytochrome c in the IMS and 4 protons from the mitochondrial matrix. The chain is Cytochrome c oxidase subunit 3 (MT-CO3) from Gallus gallus (Chicken).